A 244-amino-acid polypeptide reads, in one-letter code: Venom nerve growth factor (244 aa).

A signal peptide spans 1 to 18 (MSMLCYTLIIAFLIGIWA). Residues 19 to 125 (APKSEDNVSL…SLNRNIRAKR (107 aa)) constitute a propeptide that is removed on maturation. Disulfide bonds link Cys139/Cys204, Cys182/Cys232, and Cys192/Cys234. Asn148 carries N-linked (GlcNAc...) asparagine glycosylation.

It belongs to the NGF-beta family. In terms of assembly, homodimer; non-covalently linked. Post-translationally, N-glycosylated. In terms of tissue distribution, expressed by the venom gland.

It is found in the secreted. Functionally, nerve growth factor is important for the development and maintenance of the sympathetic and sensory nervous systems. It stimulates division and differentiation of sympathetic and embryonic sensory neurons as well as basal forebrain cholinergic neurons in the brain. Its relevance in the snake venom is not clear. However, it has been shown to inhibit metalloproteinase-dependent proteolysis of platelet glycoprotein Ib alpha, suggesting a metalloproteinase inhibition to prevent metalloprotease autodigestion and/or protection against prey proteases. Binds a lipid between the two protein chains in the homodimer. The lipid-bound form promotes histamine relase from mouse mast cells, contrary to the lipid-free form. It promotes neurite outgrowth in rat PC12 pheochromocytoma cells. This Macrovipera lebetinus (Levantine viper) protein is Venom nerve growth factor.